Consider the following 89-residue polypeptide: Cell division topological specificity factor (89 aa).

Belongs to the MinE family.

Functionally, prevents the cell division inhibition by proteins MinC and MinD at internal division sites while permitting inhibition at polar sites. This ensures cell division at the proper site by restricting the formation of a division septum at the midpoint of the long axis of the cell. In Klebsiella pneumoniae subsp. pneumoniae (strain ATCC 700721 / MGH 78578), this protein is Cell division topological specificity factor.